The chain runs to 688 residues: Potassium-transporting ATPase ATP-binding subunit (688 aa).

Transmembrane regions (helical) follow at residues 34–54 (PVMF…LAIL), 62–82 (AMFT…ANMA), 219–239 (VALT…TATL), and 260–280 (VLVA…LSAI). Asp313 (4-aspartylphosphate intermediate) is an active-site residue. Residues Asp350, Glu354, 383 to 390 (FSAQTRMS), and Lys401 each bind ATP. Mg(2+) contacts are provided by Asp524 and Asp528. 3 helical membrane-spanning segments follow: residues 594–614 (FAII…LNIM), 622–642 (AILS…PLAL), and 662–682 (IYGL…DLLL).

Belongs to the cation transport ATPase (P-type) (TC 3.A.3) family. Type IA subfamily. As to quaternary structure, the system is composed of three essential subunits: KdpA, KdpB and KdpC.

It is found in the cell inner membrane. It carries out the reaction K(+)(out) + ATP + H2O = K(+)(in) + ADP + phosphate + H(+). Functionally, part of the high-affinity ATP-driven potassium transport (or Kdp) system, which catalyzes the hydrolysis of ATP coupled with the electrogenic transport of potassium into the cytoplasm. This subunit is responsible for energy coupling to the transport system and for the release of the potassium ions to the cytoplasm. The chain is Potassium-transporting ATPase ATP-binding subunit from Yersinia pseudotuberculosis serotype I (strain IP32953).